We begin with the raw amino-acid sequence, 38 residues long: Conotoxin FVIA (38 aa).

Positions 1–12 are excised as a propeptide; the sequence is ILSLSLLDRSTR. Disulfide bonds link cysteine 13/cysteine 28, cysteine 20/cysteine 32, and cysteine 27/cysteine 37. Cysteine 37 is modified (cysteine amide).

Belongs to the conotoxin O1 superfamily. In terms of tissue distribution, expressed by the venom duct.

The protein localises to the secreted. Functionally, omega-conotoxins act at presynaptic membranes, they bind and block voltage-gated calcium channels (Cav). This peptide reversibly and selectively inhibits Cav2.2/CACNA1B (IC(50)=11.5 nM) voltage-gated calcium channels. Channel time recovery after toxin exposure is short (about 50 seconds). In vivo, it effectively and dose-dependently reduces nociceptive behavior in the formalin test and in neuropathic pain models, and reduces mechanical and thermal allodynia in the tail nerve injury rat model. It also shows significant analgesic effects on writhing in mouse neurotransmitter- and cytokine-induced pain models, though it has no effect on acute thermal pain and interferon-gamma-induced pain. It also depresses blood pressure immediately after administration, but pressure recovers relatively quickly and completely. This Conus fulmen (Thunderbolt cone) protein is Conotoxin FVIA.